We begin with the raw amino-acid sequence, 628 residues long: Chaperone protein DnaK (628 aa).

A Phosphothreonine; by autocatalysis modification is found at T197. The interval 597–628 (EQMYKGEQGAQGGAADTSKKKSDDDVIDAEIE) is disordered.

The protein belongs to the heat shock protein 70 family.

Functionally, acts as a chaperone. In Sulfurimonas denitrificans (strain ATCC 33889 / DSM 1251) (Thiomicrospira denitrificans (strain ATCC 33889 / DSM 1251)), this protein is Chaperone protein DnaK.